Reading from the N-terminus, the 1373-residue chain is DNA-directed RNA polymerase subunit beta (1373 aa).

It belongs to the RNA polymerase beta chain family. The RNAP catalytic core consists of 2 alpha, 1 beta, 1 beta' and 1 omega subunit. When a sigma factor is associated with the core the holoenzyme is formed, which can initiate transcription.

It carries out the reaction RNA(n) + a ribonucleoside 5'-triphosphate = RNA(n+1) + diphosphate. Functionally, DNA-dependent RNA polymerase catalyzes the transcription of DNA into RNA using the four ribonucleoside triphosphates as substrates. The chain is DNA-directed RNA polymerase subunit beta from Rickettsia akari (strain Hartford).